The following is a 625-amino-acid chain: Phosphomethylpyrimidine synthase (625 aa).

Substrate is bound by residues N231, M260, Y289, H325, 345 to 347 (SRG), 386 to 389 (DGLR), and E425. H429 provides a ligand contact to Zn(2+). Residue Y452 participates in substrate binding. H493 lines the Zn(2+) pocket. Residues C573, C576, and C581 each contribute to the [4Fe-4S] cluster site.

Belongs to the ThiC family. As to quaternary structure, homodimer. The cofactor is [4Fe-4S] cluster.

The catalysed reaction is 5-amino-1-(5-phospho-beta-D-ribosyl)imidazole + S-adenosyl-L-methionine = 4-amino-2-methyl-5-(phosphooxymethyl)pyrimidine + CO + 5'-deoxyadenosine + formate + L-methionine + 3 H(+). It functions in the pathway cofactor biosynthesis; thiamine diphosphate biosynthesis. Functionally, catalyzes the synthesis of the hydroxymethylpyrimidine phosphate (HMP-P) moiety of thiamine from aminoimidazole ribotide (AIR) in a radical S-adenosyl-L-methionine (SAM)-dependent reaction. The chain is Phosphomethylpyrimidine synthase from Acinetobacter baumannii (strain AB0057).